Here is a 281-residue protein sequence, read N- to C-terminus: Probable endonuclease 4 (281 aa).

H78, H118, E149, D181, H184, H216, D229, H231, and E260 together coordinate Zn(2+).

This sequence belongs to the AP endonuclease 2 family. The cofactor is Zn(2+).

The enzyme catalyses Endonucleolytic cleavage to 5'-phosphooligonucleotide end-products.. Endonuclease IV plays a role in DNA repair. It cleaves phosphodiester bonds at apurinic or apyrimidinic (AP) sites, generating a 3'-hydroxyl group and a 5'-terminal sugar phosphate. In Thermoplasma acidophilum (strain ATCC 25905 / DSM 1728 / JCM 9062 / NBRC 15155 / AMRC-C165), this protein is Probable endonuclease 4.